We begin with the raw amino-acid sequence, 312 residues long: MKLFAGNAIPELAQLIANRLYTSLGVAAVNRFSDGEISVQINENVRGGDLFIIQSTCAPTNDNLMELVVMVDALRRASAGRITAVMPYFGYSRQDRRVRSARVPITAKVVADFLSSVGVDRVLTVDLHAEQIQGFFDVPVDNVFGSPILLEDMLQQDFNNPIVVSPDIGGVVRARAIAKLLNDTDMAIIDKRRPRANMSQVMHIIGEVADRDCVLVDDMIDTSSTLCKAAEALKEHGAKRVFAYATHPIFSGQAHANIKNSVIDEVIICDTIPLNSAIKALPNVRTLTLSGMLAEAIRRISNEESISAMFEH.

ATP-binding positions include 34–36 (DGE) and 93–94 (RQ). H128 and D167 together coordinate Mg(2+). Residue K191 is part of the active site. Residues R193 and D217 each contribute to the D-ribose 5-phosphate site.

Belongs to the ribose-phosphate pyrophosphokinase family. Class I subfamily. As to quaternary structure, homohexamer. Mg(2+) is required as a cofactor.

It localises to the cytoplasm. It catalyses the reaction D-ribose 5-phosphate + ATP = 5-phospho-alpha-D-ribose 1-diphosphate + AMP + H(+). It functions in the pathway metabolic intermediate biosynthesis; 5-phospho-alpha-D-ribose 1-diphosphate biosynthesis; 5-phospho-alpha-D-ribose 1-diphosphate from D-ribose 5-phosphate (route I): step 1/1. Functionally, involved in the biosynthesis of the central metabolite phospho-alpha-D-ribosyl-1-pyrophosphate (PRPP) via the transfer of pyrophosphoryl group from ATP to 1-hydroxyl of ribose-5-phosphate (Rib-5-P). The polypeptide is Ribose-phosphate pyrophosphokinase (Baumannia cicadellinicola subsp. Homalodisca coagulata).